The sequence spans 1066 residues: Protein sts5 (1066 aa).

Positions 18 to 28 (QQDPSDAQSSP) are enriched in low complexity. Disordered stretches follow at residues 18–40 (QQDP…SLTT), 154–178 (ATST…SPNS), and 247–286 (SNFR…RKNL). The segment covering 29 to 40 (TFVPSANPSLTT) has biased composition (polar residues). The residue at position 157 (threonine 157) is a Phosphothreonine. Low complexity predominate over residues 168-178 (HSVASVSSPNS). Threonine 262 is subject to Phosphothreonine. Serine 264 is modified (phosphoserine). Over residues 270 to 280 (SGSGFSSGGSG) the composition is skewed to gly residues. The residue at position 377 (threonine 377) is a Phosphothreonine. The segment at 454 to 480 (SSAANKERQTSSGNQGSSNNSGNDKPK) is disordered. The segment covering 464 to 476 (SSGNQGSSNNSGN) has biased composition (low complexity). A CSD2 domain is found at 482–556 (VWFKPSDKRV…AQVSALLHDT (75 aa)). Residues 618–934 (NINSSSATDF…VHYQLQLLLR (317 aa)) enclose the RNB domain. One can recognise a DIS3L2 C-terminal domain in the interval 983–1033 (QDGLVCFVAPSYFDVFFPSLGMEKRVHLDLLNLTHVRFEEDQGILSLYDES).

This sequence belongs to the RNR ribonuclease family. In terms of assembly, interacts with serine/threonine phosphatase ppe1, protein kinase C and an osmosensing MAP kinase.

It localises to the cytoplasm. In terms of biological role, required for the maintenance of cell shape during interphase. Required for localization of cortical actin to the growing tips before mitosis. The chain is Protein sts5 (sts5) from Schizosaccharomyces pombe (strain 972 / ATCC 24843) (Fission yeast).